A 419-amino-acid chain; its full sequence is Transcription termination factor Rho (419 aa).

The region spanning 48–123 (DIFGDGVLEI…LKVNKVNYDK (76 aa)) is the Rho RNA-BD domain. RNA-binding regions lie at residues 61–66 (GFGFLR), 78–80 (DIY), and 108–110 (ERY). Residues 169–174 (GRGQRG), 181–186 (KAGKTM), and arginine 212 contribute to the ATP site. The RNA-binding 2 stretch occupies residues 284-288 (VLTGG).

The protein belongs to the Rho family. In terms of assembly, homohexamer. The homohexamer assembles into an open ring structure.

Its function is as follows. Facilitates transcription termination by a mechanism that involves Rho binding to the nascent RNA, activation of Rho's RNA-dependent ATPase activity, and release of the mRNA from the DNA template. The polypeptide is Transcription termination factor Rho (Buchnera aphidicola subsp. Baizongia pistaciae (strain Bp)).